Here is a 718-residue protein sequence, read N- to C-terminus: Probable protein S-acyltransferase 19 (718 aa).

Transmembrane regions (helical) follow at residues Val-16–Phe-36 and Ile-41–Tyr-61. The tract at residues Glu-100–Gly-125 is disordered. A compositionally biased stretch (polar residues) spans Ser-103 to Lys-124. The region spanning Leu-174 to Ala-224 is the DHHC domain. The active-site S-palmitoyl cysteine intermediate is Cys-204. The next 2 helical transmembrane spans lie at Leu-222 to Val-242 and Ala-277 to Ile-297. Disordered regions lie at residues Ser-454–Glu-511, Pro-598–Gln-649, and Gly-664–Lys-718. Polar residues-rich tracts occupy residues Cys-479 to Gly-488 and Pro-598 to Pro-626. A compositionally biased stretch (basic and acidic residues) spans Asp-673 to Asp-687.

The protein belongs to the DHHC palmitoyltransferase family.

It localises to the cell membrane. The enzyme catalyses L-cysteinyl-[protein] + hexadecanoyl-CoA = S-hexadecanoyl-L-cysteinyl-[protein] + CoA. Palmitoyl acyltransferase. This is Probable protein S-acyltransferase 19 (PAT19) from Arabidopsis thaliana (Mouse-ear cress).